Here is a 1038-residue protein sequence, read N- to C-terminus: SEH-associated protein 4 (1038 aa).

The WD 1 repeat unit spans residues 50 to 90; the sequence is KDFGSITCLDYSESEIGMIGVGEKNGYLRIFNISGQNSSSP. Serine 123 and serine 136 each carry phosphoserine. 3 WD repeats span residues 147–189, 235–276, and 544–587; these read KKQR…DSHE, QHPT…DQAS, and NTWR…SNQD.

The protein belongs to the WD repeat mio family. Component of the SEA complex composed of at least IML1/SEA1, RTC1/SEA2, MTC5/SEA3, NPR2, NPR3, SEA4, SEC13 and SEH1.

The protein resides in the cytoplasm. Its subcellular location is the vacuole membrane. Its function is as follows. Component of the SEA complex which coats the vacuolar membrane and is involved in intracellular trafficking, autophagy, response to nitrogen starvation, and amino acid biogenesis. The chain is SEH-associated protein 4 (SEA4) from Saccharomyces cerevisiae (strain ATCC 204508 / S288c) (Baker's yeast).